A 335-amino-acid polypeptide reads, in one-letter code: Phosphate acyltransferase (335 aa).

This sequence belongs to the PlsX family. Homodimer. Probably interacts with PlsY.

Its subcellular location is the cytoplasm. The enzyme catalyses a fatty acyl-[ACP] + phosphate = an acyl phosphate + holo-[ACP]. Its pathway is lipid metabolism; phospholipid metabolism. Its function is as follows. Catalyzes the reversible formation of acyl-phosphate (acyl-PO(4)) from acyl-[acyl-carrier-protein] (acyl-ACP). This enzyme utilizes acyl-ACP as fatty acyl donor, but not acyl-CoA. The polypeptide is Phosphate acyltransferase (Leptospira interrogans serogroup Icterohaemorrhagiae serovar copenhageni (strain Fiocruz L1-130)).